We begin with the raw amino-acid sequence, 335 residues long: Trans-3-hydroxy-L-proline dehydratase (335 aa).

The active-site Proton acceptor is Cys-91. Substrate-binding positions include 92–93 (GH) and 256–257 (GS).

Belongs to the proline racemase family. In terms of assembly, homodimer.

It carries out the reaction trans-3-hydroxy-L-proline = 1-pyrroline-2-carboxylate + H2O. The protein operates within amino-acid degradation. In terms of biological role, catalyzes the dehydration of trans-3-hydroxy-L-proline (t3LHyp) to Delta(1)-pyrroline-2-carboxylate (Pyr2C). Together with LhpI, is involved in a t3LHyp degradation pathway to L-proline, which allows A.brasilense to grow on t3LHyp as a sole carbon source. The protein is Trans-3-hydroxy-L-proline dehydratase of Azospirillum brasilense.